Here is a 495-residue protein sequence, read N- to C-terminus: Fibronectin type III and SPRY domain-containing protein 1 (495 aa).

Residues 4–99 (QKESLRKIIT…ALESSEELLE (96 aa)) are a coiled coil. The region spanning 105 to 162 (LCSSENDSFTQAAKDIKDSVTMAPAFRLSLKAKASDSMNHMMVDFTHERNLLQSITFL) is the COS domain. The Fibronectin type-III domain maps to 164 to 268 (VPATPEIHVA…EPVTLETHAF (105 aa)). The B30.2/SPRY domain maps to 281 to 476 (LKVEDLSVEW…VQTGLQVPSI (196 aa)). The tract at residues 306-332 (KNRTNSPMHSPARTAMMSPKRAPSARV) is disordered. The residue at position 490 (S490) is a Phosphoserine.

In terms of assembly, oligomerization is required for binding to microtubules.

The protein resides in the cytoplasm. Its subcellular location is the cytoskeleton. It localises to the microtubule organizing center. It is found in the centrosome. The protein localises to the nucleus. The protein resides in the cleavage furrow. In terms of biological role, may be involved in microtubule organization and stabilization. In Danio rerio (Zebrafish), this protein is Fibronectin type III and SPRY domain-containing protein 1 (fsd1).